A 202-amino-acid polypeptide reads, in one-letter code: Oocyte-secreted protein 1 (202 aa).

The first 21 residues, 1–21 (MKPFVGLLGLLLLLSFMKTCA), serve as a signal peptide directing secretion. Positions 157–183 (QPNLSTSSEDHHVSTEPWASETSRSEA) are disordered.

The protein belongs to the PLAC1 family. As to expression, expressed in oocytes in primary through antral-stage follicles. Expressed in liver and ovary.

The protein localises to the secreted. Functionally, may be involved in cell differentiation. This is Oocyte-secreted protein 1 (Oosp1) from Mus musculus (Mouse).